The following is a 391-amino-acid chain: Calcium-binding and spermatid-specific protein 1 (391 aa).

Disordered regions lie at residues 1–23 (MAED…TPTE), 90–110 (PEKE…GSIT), and 152–221 (KEVV…KEVT). Positions 90–101 (PEKEITTPTETP) are enriched in low complexity. Phosphoserine is present on residues Ser-253 and Ser-269. The tract at residues 271 to 299 (EKAKDNVEDPLNDEESTDGANDWMEKETA) is disordered. Residues 278 to 287 (EDPLNDEEST) show a composition bias toward acidic residues. Ser-314, Ser-347, Ser-357, Ser-372, and Ser-376 each carry phosphoserine. The interval 330–351 (EESHVNTTDLPENETTESVTNV) is disordered.

In terms of tissue distribution, detected only in testis. Expressed from stages X to VIII of the seminiferous epithelial cycle. Expressed from step 13 to step 16 of spermatid development (at protein level).

The protein resides in the cytoplasm. It localises to the mitochondrion inner membrane. The protein localises to the cell projection. It is found in the cilium. Its subcellular location is the flagellum. The protein resides in the cytoplasmic vesicle. It localises to the secretory vesicle. The protein localises to the acrosome. Calcium-binding protein. Essential for maintaining the structural integrity of the sperm flagella. This is Calcium-binding and spermatid-specific protein 1 (Cabs1) from Mus musculus (Mouse).